A 183-amino-acid chain; its full sequence is Hypoxanthine/guanine phosphoribosyltransferase (183 aa).

The protein belongs to the purine/pyrimidine phosphoribosyltransferase family. Archaeal HPRT subfamily. In terms of assembly, homodimer.

Its subcellular location is the cytoplasm. It carries out the reaction IMP + diphosphate = hypoxanthine + 5-phospho-alpha-D-ribose 1-diphosphate. It catalyses the reaction GMP + diphosphate = guanine + 5-phospho-alpha-D-ribose 1-diphosphate. It participates in purine metabolism; IMP biosynthesis via salvage pathway; IMP from hypoxanthine: step 1/1. Its function is as follows. Catalyzes a salvage reaction resulting in the formation of IMP that is energically less costly than de novo synthesis. The chain is Hypoxanthine/guanine phosphoribosyltransferase from Methanothermococcus okinawensis (strain DSM 14208 / JCM 11175 / IH1).